The chain runs to 45 residues: Mu-conotoxin-like Cal 12.1.1d (45 aa).

4 disulfides stabilise this stretch: cysteine 3-cysteine 16, cysteine 11-cysteine 28, cysteine 18-cysteine 33, and cysteine 27-cysteine 39. Tryptophan 17 is subject to 6'-bromotryptophan. Residue glutamate 21 is modified to 4-carboxyglutamate. Position 23 is a 4-hydroxyproline (proline 23). 6'-bromotryptophan is present on residues tryptophan 37 and tryptophan 38. Position 40 is a 4-hydroxyproline (proline 40). 6'-bromotryptophan is present on tryptophan 44.

As to expression, expressed by the venom duct.

It is found in the secreted. Its function is as follows. Mu-conotoxins block voltage-gated sodium channels. This toxin reversibly blocks voltage-gated sodium channel in cephalopods, with no alteration in the voltage dependence of sodium conductance or on the kinetics of inactivation. In Californiconus californicus (California cone), this protein is Mu-conotoxin-like Cal 12.1.1d.